The sequence spans 167 residues: Small ribosomal subunit protein uS5 (167 aa).

Residues 11 to 74 (LQEKLIAVNR…EKARRNMINV (64 aa)) form the S5 DRBM domain.

It belongs to the universal ribosomal protein uS5 family. Part of the 30S ribosomal subunit. Contacts proteins S4 and S8.

Its function is as follows. With S4 and S12 plays an important role in translational accuracy. Located at the back of the 30S subunit body where it stabilizes the conformation of the head with respect to the body. The protein is Small ribosomal subunit protein uS5 of Escherichia coli O139:H28 (strain E24377A / ETEC).